A 369-amino-acid chain; its full sequence is tRNA 2-selenouridine synthase (369 aa).

One can recognise a Rhodanese domain in the interval 15–138 (FLNQHPMMDV…MRQYLIGVIE (124 aa)). C98 (S-selanylcysteine intermediate) is an active-site residue.

The protein belongs to the SelU family. In terms of assembly, monomer.

The enzyme catalyses 5-methylaminomethyl-2-thiouridine(34) in tRNA + selenophosphate + (2E)-geranyl diphosphate + H2O + H(+) = 5-methylaminomethyl-2-selenouridine(34) in tRNA + (2E)-thiogeraniol + phosphate + diphosphate. It carries out the reaction 5-methylaminomethyl-2-thiouridine(34) in tRNA + (2E)-geranyl diphosphate = 5-methylaminomethyl-S-(2E)-geranyl-thiouridine(34) in tRNA + diphosphate. It catalyses the reaction 5-methylaminomethyl-S-(2E)-geranyl-thiouridine(34) in tRNA + selenophosphate + H(+) = 5-methylaminomethyl-2-(Se-phospho)selenouridine(34) in tRNA + (2E)-thiogeraniol. The catalysed reaction is 5-methylaminomethyl-2-(Se-phospho)selenouridine(34) in tRNA + H2O = 5-methylaminomethyl-2-selenouridine(34) in tRNA + phosphate. Functionally, involved in the post-transcriptional modification of the uridine at the wobble position (U34) of tRNA(Lys), tRNA(Glu) and tRNA(Gln). Catalyzes the conversion of 2-thiouridine (S2U-RNA) to 2-selenouridine (Se2U-RNA). Acts in a two-step process involving geranylation of 2-thiouridine (S2U) to S-geranyl-2-thiouridine (geS2U) and subsequent selenation of the latter derivative to 2-selenouridine (Se2U) in the tRNA chain. The protein is tRNA 2-selenouridine synthase of Shewanella sp. (strain W3-18-1).